We begin with the raw amino-acid sequence, 306 residues long: Natural cytotoxicity triggering receptor 1 (306 aa).

A signal peptide spans Met-1–Ala-21. Residues Pro-22–Arg-257 are Extracellular-facing. 2 Ig-like domains span residues Glu-42–Tyr-100 and Gly-137–Gly-192. 2 disulfides stabilise this stretch: Cys-49–Cys-98 and Cys-144–Cys-190. Residue Asn-216 is glycosylated (N-linked (GlcNAc...) asparagine). The chain crosses the membrane as a helical span at residues Met-258–Ser-278. Residues Arg-279 to Glu-306 are Cytoplasmic-facing.

The protein belongs to the natural cytotoxicity receptor (NCR) family. As to quaternary structure, interacts with CD3Z and FCER1G. In terms of tissue distribution, expressed in NK cells.

The protein resides in the cell membrane. Cytotoxicity-activating receptor that may contribute to the increased efficiency of activated natural killer (NK) cells to mediate tumor cell lysis. The polypeptide is Natural cytotoxicity triggering receptor 1 (NCR1) (Macaca fascicularis (Crab-eating macaque)).